A 476-amino-acid chain; its full sequence is Aspartyl/glutamyl-tRNA(Asn/Gln) amidotransferase subunit B (476 aa).

The protein belongs to the GatB/GatE family. GatB subfamily. In terms of assembly, heterotrimer of A, B and C subunits.

It carries out the reaction L-glutamyl-tRNA(Gln) + L-glutamine + ATP + H2O = L-glutaminyl-tRNA(Gln) + L-glutamate + ADP + phosphate + H(+). The enzyme catalyses L-aspartyl-tRNA(Asn) + L-glutamine + ATP + H2O = L-asparaginyl-tRNA(Asn) + L-glutamate + ADP + phosphate + 2 H(+). In terms of biological role, allows the formation of correctly charged Asn-tRNA(Asn) or Gln-tRNA(Gln) through the transamidation of misacylated Asp-tRNA(Asn) or Glu-tRNA(Gln) in organisms which lack either or both of asparaginyl-tRNA or glutaminyl-tRNA synthetases. The reaction takes place in the presence of glutamine and ATP through an activated phospho-Asp-tRNA(Asn) or phospho-Glu-tRNA(Gln). The sequence is that of Aspartyl/glutamyl-tRNA(Asn/Gln) amidotransferase subunit B from Listeria welshimeri serovar 6b (strain ATCC 35897 / DSM 20650 / CCUG 15529 / CIP 8149 / NCTC 11857 / SLCC 5334 / V8).